A 1373-amino-acid polypeptide reads, in one-letter code: DNA-directed RNA polymerase subunit beta (1373 aa).

It belongs to the RNA polymerase beta chain family. As to quaternary structure, the RNAP catalytic core consists of 2 alpha, 1 beta, 1 beta' and 1 omega subunit. When a sigma factor is associated with the core the holoenzyme is formed, which can initiate transcription.

The catalysed reaction is RNA(n) + a ribonucleoside 5'-triphosphate = RNA(n+1) + diphosphate. Its function is as follows. DNA-dependent RNA polymerase catalyzes the transcription of DNA into RNA using the four ribonucleoside triphosphates as substrates. This Rickettsia massiliae protein is DNA-directed RNA polymerase subunit beta.